Reading from the N-terminus, the 87-residue chain is U3-theraphotoxin-Cg1c (87 aa).

The signal sequence occupies residues 1–23 (MRTFTLIAILTCAVLVIFHVSAA). Positions 24 to 51 (EELEAQDVIQPEDIFTGVATLEEDRIFE) are excised as a propeptide. Intrachain disulfides connect Cys-52–Cys-65, Cys-56–Cys-79, and Cys-73–Cys-84.

The protein belongs to the neurotoxin 12 (Hwtx-2) family. 03 (juruin) subfamily. Expressed by the venom gland.

It localises to the secreted. Probable ion channel inhibitor. The chain is U3-theraphotoxin-Cg1c from Chilobrachys guangxiensis (Chinese earth tiger tarantula).